The following is a 249-amino-acid chain: 1-(5-phosphoribosyl)-5-[(5-phosphoribosylamino)methylideneamino] imidazole-4-carboxamide isomerase (249 aa).

Aspartate 10 serves as the catalytic Proton acceptor. The active-site Proton donor is the aspartate 131.

It belongs to the HisA/HisF family.

It localises to the cytoplasm. It carries out the reaction 1-(5-phospho-beta-D-ribosyl)-5-[(5-phospho-beta-D-ribosylamino)methylideneamino]imidazole-4-carboxamide = 5-[(5-phospho-1-deoxy-D-ribulos-1-ylimino)methylamino]-1-(5-phospho-beta-D-ribosyl)imidazole-4-carboxamide. The protein operates within amino-acid biosynthesis; L-histidine biosynthesis; L-histidine from 5-phospho-alpha-D-ribose 1-diphosphate: step 4/9. This chain is 1-(5-phosphoribosyl)-5-[(5-phosphoribosylamino)methylideneamino] imidazole-4-carboxamide isomerase, found in Brevibacillus brevis (strain 47 / JCM 6285 / NBRC 100599).